The chain runs to 253 residues: Proteasome subunit alpha type-3 (253 aa).

A disordered region spans residues 230 to 253 (ELTEKARKAGDAANKDEDSDNETH). Residues 231 to 253 (LTEKARKAGDAANKDEDSDNETH) show a composition bias toward basic and acidic residues. Ser248 is subject to Phosphoserine.

Belongs to the peptidase T1A family. As to quaternary structure, the 26S proteasome consists of a 20S proteasome core and two 19S regulatory subunits. The 20S proteasome core is composed of 28 subunits that are arranged in four stacked rings, resulting in a barrel-shaped structure. The two end rings are each formed by seven alpha subunits, and the two central rings are each formed by seven beta subunits. The catalytic chamber with the active sites is on the inside of the barrel. Interacts with ntc.

Its subcellular location is the cytoplasm. The protein resides in the nucleus. Its function is as follows. The proteasome is a multicatalytic proteinase complex which is characterized by its ability to cleave peptides with Arg, Phe, Tyr, Leu, and Glu adjacent to the leaving group at neutral or slightly basic pH. The proteasome has an ATP-dependent proteolytic activity. In Drosophila melanogaster (Fruit fly), this protein is Proteasome subunit alpha type-3 (Prosalpha7).